Reading from the N-terminus, the 328-residue chain is MAKDIRVLLYYKYVPIENAEKFAADHLAFCKSIGLKGRILVADEGINGTVSGDYETTQKYMDYVHSLPGMEDLWFKIDEENEQAFKKMFVRYKKEIVHLGLEDNDFDNDINPLETTGAYLSPKEFKEALLDEDTVVLDTRNDYEYDLGHFRGAIRPDIRNFRELPQWVRDNKEKFMDKRVVVYCTGGVRCEKFSGWMVREGYKDVGQLHGGIATYGKDPEVQGELWDGKMYVFDERISVDINHVDPVVIGKDWFDGTPCERYVNCGNPECNRRILTSEENEDKYLRGCSHECRVHPRNRYVAENGLSQAEVVERLAVIGESLETLVAQ.

Residues 130–224 (LDEDTVVLDT…YGKDPEVQGE (95 aa)) enclose the Rhodanese domain. The active-site Cysteine persulfide intermediate is the Cys184.

Belongs to the TrhO family.

The catalysed reaction is uridine(34) in tRNA + AH2 + O2 = 5-hydroxyuridine(34) in tRNA + A + H2O. Its function is as follows. Catalyzes oxygen-dependent 5-hydroxyuridine (ho5U) modification at position 34 in tRNAs. This Streptococcus gordonii (strain Challis / ATCC 35105 / BCRC 15272 / CH1 / DL1 / V288) protein is tRNA uridine(34) hydroxylase.